A 453-amino-acid chain; its full sequence is NADH-quinone oxidoreductase subunit D (453 aa).

The span at Met1–Gln21 shows a compositional bias: basic and acidic residues. The interval Met1–Val30 is disordered.

Belongs to the complex I 49 kDa subunit family. NDH-1 is composed of 14 different subunits. Subunits NuoB, C, D, E, F, and G constitute the peripheral sector of the complex.

The protein resides in the cell membrane. It catalyses the reaction a quinone + NADH + 5 H(+)(in) = a quinol + NAD(+) + 4 H(+)(out). NDH-1 shuttles electrons from NADH, via FMN and iron-sulfur (Fe-S) centers, to quinones in the respiratory chain. The immediate electron acceptor for the enzyme in this species is believed to be a menaquinone. Couples the redox reaction to proton translocation (for every two electrons transferred, four hydrogen ions are translocated across the cytoplasmic membrane), and thus conserves the redox energy in a proton gradient. The sequence is that of NADH-quinone oxidoreductase subunit D from Nocardia farcinica (strain IFM 10152).